The sequence spans 479 residues: UDP-N-acetylmuramoyl-L-alanyl-D-glutamate--2,6-diaminopimelate ligase (479 aa).

A UDP-N-acetyl-alpha-D-muramoyl-L-alanyl-D-glutamate-binding site is contributed by S21. 98–104 (GTNGKSS) serves as a coordination point for ATP. UDP-N-acetyl-alpha-D-muramoyl-L-alanyl-D-glutamate contacts are provided by residues 144 to 145 (TT), S171, Q177, and R179. Position 211 is an N6-carboxylysine (K211). Residues R372, 396-399 (DNPR), G446, and E450 each bind meso-2,6-diaminopimelate. Residues 396-399 (DNPR) carry the Meso-diaminopimelate recognition motif motif.

The protein belongs to the MurCDEF family. MurE subfamily. It depends on Mg(2+) as a cofactor. Carboxylation is probably crucial for Mg(2+) binding and, consequently, for the gamma-phosphate positioning of ATP.

It localises to the cytoplasm. The enzyme catalyses UDP-N-acetyl-alpha-D-muramoyl-L-alanyl-D-glutamate + meso-2,6-diaminopimelate + ATP = UDP-N-acetyl-alpha-D-muramoyl-L-alanyl-gamma-D-glutamyl-meso-2,6-diaminopimelate + ADP + phosphate + H(+). It functions in the pathway cell wall biogenesis; peptidoglycan biosynthesis. Catalyzes the addition of meso-diaminopimelic acid to the nucleotide precursor UDP-N-acetylmuramoyl-L-alanyl-D-glutamate (UMAG) in the biosynthesis of bacterial cell-wall peptidoglycan. This chain is UDP-N-acetylmuramoyl-L-alanyl-D-glutamate--2,6-diaminopimelate ligase, found in Rickettsia rickettsii.